A 414-amino-acid chain; its full sequence is MTLFCEQVPYPRLAEAFGTPLYVYSQSALTEAFEHYQTAFAALNPLVCYAVKANGNLSIIKHFASLGSGFDIVSGGELARVLAAGGDAAKTIFSGVGKSEAEIEFALNAGVKCFNMESIPEIDRIQKVAARLGKTAPVSLRINPDVDAKTHPYISTGLKANKFGIAYADALEAYHYAAQQPNLKIIGIDCHIGSQLTDLSPLVEACERILILVDALAAEGIVLEHLDLGGGVGIVYQDENVPDLGAYAQAVQKLIGTRRLKLILEPGRSLVGNAGSLLTRVEFVKYGEEKNFVMVDAAMNDLMRPALYDAYHHIEAVETKDIATLTANIVGPICETGDFLGKDRTIACEEGDLLLIRSAGAYGASMASNYNARNRAAEVLVDGNEYRLIRRRETLEQQMANELACLQAEHQNAV.

The residue at position 52 (lysine 52) is an N6-(pyridoxal phosphate)lysine. Pyridoxal 5'-phosphate contacts are provided by residues glycine 231 and 265–268; that span reads EPGR. Substrate contacts are provided by arginine 268, arginine 304, and tyrosine 308. Cysteine 334 acts as the Proton donor in catalysis. Residues glutamate 335 and tyrosine 362 each coordinate substrate. Tyrosine 362 contributes to the pyridoxal 5'-phosphate binding site.

Belongs to the Orn/Lys/Arg decarboxylase class-II family. LysA subfamily. In terms of assembly, homodimer. The cofactor is pyridoxal 5'-phosphate.

The enzyme catalyses meso-2,6-diaminopimelate + H(+) = L-lysine + CO2. It participates in amino-acid biosynthesis; L-lysine biosynthesis via DAP pathway; L-lysine from DL-2,6-diaminopimelate: step 1/1. Functionally, specifically catalyzes the decarboxylation of meso-diaminopimelate (meso-DAP) to L-lysine. The sequence is that of Diaminopimelate decarboxylase from Neisseria meningitidis serogroup B (strain ATCC BAA-335 / MC58).